Reading from the N-terminus, the 431-residue chain is Tryptophan synthase beta chain 2 (431 aa).

Lysine 111 is subject to N6-(pyridoxal phosphate)lysine.

It belongs to the TrpB family. As to quaternary structure, tetramer of two alpha and two beta chains. Pyridoxal 5'-phosphate serves as cofactor.

The enzyme catalyses (1S,2R)-1-C-(indol-3-yl)glycerol 3-phosphate + L-serine = D-glyceraldehyde 3-phosphate + L-tryptophan + H2O. The protein operates within amino-acid biosynthesis; L-tryptophan biosynthesis; L-tryptophan from chorismate: step 5/5. Its function is as follows. The beta subunit is responsible for the synthesis of L-tryptophan from indole and L-serine. This Sulfurisphaera tokodaii (strain DSM 16993 / JCM 10545 / NBRC 100140 / 7) (Sulfolobus tokodaii) protein is Tryptophan synthase beta chain 2 (trpB2).